The chain runs to 210 residues: NADH dehydrogenase [ubiquinone] iron-sulfur protein 8, mitochondrial (210 aa).

Residues 1–34 (MRCLTTPMLLRALAQAARAGPPGGRSLHSSAVAA) constitute a mitochondrion transit peptide. 2 consecutive 4Fe-4S ferredoxin-type domains span residues 102 to 131 (RRYPSGEERCIACKLCEAICPAQAITIEAE) and 141 to 170 (TRYDIDMTKCIYCGFCQEACPVDAIVEGPN). [4Fe-4S] cluster is bound by residues C111, C114, C117, C121, C150, C153, C156, and C160.

It belongs to the complex I 23 kDa subunit family. Core subunit of respiratory chain NADH dehydrogenase (Complex I) which is composed of 45 different subunits. This is a component of the iron-sulfur (IP) fragment of the enzyme. Interacts with RAB5IF. Requires [4Fe-4S] cluster as cofactor. In terms of tissue distribution, expressed in all tissues with the highest level in heart and skeletal muscle and the lowest level in lung.

The protein localises to the mitochondrion inner membrane. The catalysed reaction is a ubiquinone + NADH + 5 H(+)(in) = a ubiquinol + NAD(+) + 4 H(+)(out). Functionally, core subunit of the mitochondrial membrane respiratory chain NADH dehydrogenase (Complex I) which catalyzes electron transfer from NADH through the respiratory chain, using ubiquinone as an electron acceptor. Essential for the catalytic activity and assembly of complex I. The polypeptide is NADH dehydrogenase [ubiquinone] iron-sulfur protein 8, mitochondrial (NDUFS8) (Homo sapiens (Human)).